The sequence spans 428 residues: Aerobic C4-dicarboxylate transport protein (428 aa).

9 consecutive transmembrane segments (helical) span residues 5–27, 47–64, 77–99, 141–163, 184–206, 216–238, 289–311, 326–348, and 353–375; these read LFKSLYFQVLTAIAIGILLGHYY, MIIAPVIFCTVVTGIAGM, ALLYFEIVSTIALIIGLIIVNVV, VIGAFASGNILQVLLFAVLFGFA, VIFGIINMIMRLAPIGAFGAMAF, LVQLGQLIICFYITCILFVVVVL, VVGLVIPTGYSFNLDGTSIYLTM, IFHQITLLVVLLLSSKGAAGVTG, and VLAATISAVGHLPVAGLALILGI.

It belongs to the dicarboxylate/amino acid:cation symporter (DAACS) (TC 2.A.23) family.

It localises to the cell inner membrane. Functionally, responsible for the transport of dicarboxylates such as succinate, fumarate, and malate from the periplasm across the inner membrane. The protein is Aerobic C4-dicarboxylate transport protein (dctA) of Salmonella typhimurium (strain LT2 / SGSC1412 / ATCC 700720).